Here is a 434-residue protein sequence, read N- to C-terminus: Pre-B-cell leukemia transcription factor 3 (434 aa).

The tract at residues 20 to 41 (SVQGGMALPPPPHGHEGADGDG) is disordered. Positions 32–41 (HGHEGADGDG) are enriched in basic and acidic residues. One can recognise a PBC domain in the interval 41 to 234 (GRKQDIGDIL…VMILRSRFLD (194 aa)). A PBC-A region spans residues 48-127 (DILHQIMTIT…EGVSGPEKGG (80 aa)). The interval 130–234 (AAAAAAAAAS…VMILRSRFLD (105 aa)) is PBC-B. The homeobox; TALE-type DNA-binding region spans 235–297 (ARRKRRNFSK…NKRIRYKKNI (63 aa)). Positions 326 to 341 (NQTNSPTTPNSGSSGS) are enriched in low complexity. Disordered regions lie at residues 326-349 (NQTN…NSGD) and 403-434 (LNAN…DTSN). Polar residues predominate over residues 403 to 422 (LNANGGWQDATTPSSVTSPT).

The protein belongs to the TALE/PBX homeobox family. In terms of assembly, interacts with PBXIP1. In terms of tissue distribution, ubiquitously expressed.

It localises to the nucleus. In terms of biological role, transcriptional activator that binds the sequence 5'-ATCAATCAA-3'. In Homo sapiens (Human), this protein is Pre-B-cell leukemia transcription factor 3 (PBX3).